The chain runs to 580 residues: DNA mismatch repair protein MutL (580 aa).

It belongs to the DNA mismatch repair MutL/HexB family.

In terms of biological role, this protein is involved in the repair of mismatches in DNA. It is required for dam-dependent methyl-directed DNA mismatch repair. May act as a 'molecular matchmaker', a protein that promotes the formation of a stable complex between two or more DNA-binding proteins in an ATP-dependent manner without itself being part of a final effector complex. In Chlamydia caviae (strain ATCC VR-813 / DSM 19441 / 03DC25 / GPIC) (Chlamydophila caviae), this protein is DNA mismatch repair protein MutL.